A 586-amino-acid polypeptide reads, in one-letter code: Madf and zinc finger protein 1 (586 aa).

Residues 161–194 (FMSEDDLAPPRKPGRPPRRTRPGQVFKFKVSFIR) are involved in interaction with Cp190. Positions 201–292 (HLIQAYKEHP…KCEFLSVAPV (92 aa)) form a DNA-binding region, MADF 1. The involved in interaction with Cp190 stretch occupies residues 294–319 (TPRENEEDNDLTAIKLNFKEENLITT). Residues 320 to 413 (SFIETYANYP…MCSFLPAKGS (94 aa)) constitute a DNA-binding region (MADF 2). 6 C2H2-type zinc fingers span residues 418–441 (LYCD…VKAH), 448–471 (YLCS…LRSH), 476–498 (LKCQ…TLIH), 504–527 (HVCD…NGVH), 533–555 (YSCN…IKGH), and 561–583 (KKCE…RRSH).

Interacts (via regions flanking MADF domain 1) with Cp190 (via regions between the BTB domain and first zinc finger domain); the interaction is probably direct and is essential for protein function.

The protein resides in the nucleus. Its subcellular location is the chromosome. The protein localises to the nucleoplasm. Chromatin-binding protein involved in the organization of active promoters and insulators. Essential for the activity of heterochromatin promoters; primarily binds to specific motifs within promoters of housekeeping genes. May also associate to a lesser extent with promoters in euchromatin. Mediates recruitment of Cp190, a multifunctional protein involved in the recruitment of transcription complexes, the creation of open chromatin regions and the activity of insulators. Cooperates with pita and su(Hw) to recruit Cp190 and regulate insulator function at the front-ultraabdominal (Fub) boundary. May cooperate with other C2H2 zinc finger proteins, such as M1BP, to recruit CP190 to promoters. May be involved in cellular organization and development of the eye. This is Madf and zinc finger protein 1 from Drosophila melanogaster (Fruit fly).